The primary structure comprises 413 residues: Azaphilone biosynthesis cluster protein M (413 aa).

Positions 123 to 138 are enriched in polar residues; that stretch reads STQPDQVQPNQPTPSF. The disordered stretch occupies residues 123 to 145; it reads STQPDQVQPNQPTPSFESAAGAS.

It participates in secondary metabolite biosynthesis. Its function is as follows. Part of the gene cluster that mediates the biosynthesis of azaterrilone A and other azaphilones, a class of fungal metabolites characterized by a highly oxygenated pyrano-quinone bicyclic core and exhibiting a broad range of bioactivities. The first step of the pathway begins with the non-reducing polyketide synthase tazA that assembles one acetyl-CoA starter unit, five malonyl-CoA units, and catalyzes a series of Claisen condensations, methylation, PT-mediated cyclization, and finally releases the first hexaketide precursor through the R-domain. The tazA product then undergoes reduction on its terminal ketone and the following pyran-ring formation by yet undetermined enzyme(s). Dehydration and enoyl reduction, possibly involving the trans-enoyl reductase tazE leads to the next intermediate. TazD is predicted as an acetyltransferase and might catalyze the acetylation steps leading to the synthesis of azaterrilone A. Azaterrilone A is not the final product of the taz pathway and both the highly reducing polyketide synthase tazB and the dual enzyme tazHJ catalyze late steps of the pathway, leading to the production of the 2 final stereoisomers that contain additional polyketide modification whose structures have still to be determined. The protein is Azaphilone biosynthesis cluster protein M of Aspergillus terreus (strain NIH 2624 / FGSC A1156).